Here is a 497-residue protein sequence, read N- to C-terminus: Acetyl-coenzyme A carboxylase carboxyl transferase subunit beta, chloroplastic (497 aa).

Positions leucine 230–lysine 497 constitute a CoA carboxyltransferase N-terminal domain. Residues cysteine 234, cysteine 237, cysteine 253, and cysteine 256 each contribute to the Zn(2+) site. A C4-type zinc finger spans residues cysteine 234–cysteine 256.

It belongs to the AccD/PCCB family. As to quaternary structure, acetyl-CoA carboxylase is a heterohexamer composed of biotin carboxyl carrier protein, biotin carboxylase and 2 subunits each of ACCase subunit alpha and ACCase plastid-coded subunit beta (accD). Zn(2+) is required as a cofactor.

Its subcellular location is the plastid. The protein localises to the chloroplast stroma. It catalyses the reaction N(6)-carboxybiotinyl-L-lysyl-[protein] + acetyl-CoA = N(6)-biotinyl-L-lysyl-[protein] + malonyl-CoA. It functions in the pathway lipid metabolism; malonyl-CoA biosynthesis; malonyl-CoA from acetyl-CoA: step 1/1. Functionally, component of the acetyl coenzyme A carboxylase (ACC) complex. Biotin carboxylase (BC) catalyzes the carboxylation of biotin on its carrier protein (BCCP) and then the CO(2) group is transferred by the transcarboxylase to acetyl-CoA to form malonyl-CoA. The sequence is that of Acetyl-coenzyme A carboxylase carboxyl transferase subunit beta, chloroplastic from Carica papaya (Papaya).